The primary structure comprises 117 residues: Large ribosomal subunit protein bL20c (117 aa).

The protein belongs to the bacterial ribosomal protein bL20 family.

The protein resides in the plastid. The protein localises to the chloroplast. Binds directly to 23S ribosomal RNA and is necessary for the in vitro assembly process of the 50S ribosomal subunit. It is not involved in the protein synthesizing functions of that subunit. This chain is Large ribosomal subunit protein bL20c, found in Lobularia maritima (Sweet alyssum).